The primary structure comprises 359 residues: Peptide chain release factor 1 (359 aa).

The residue at position 235 (glutamine 235) is an N5-methylglutamine. The interval 283-309 is disordered; that stretch reads QKAESERSQARRSQVGSGDRSERIRTY.

It belongs to the prokaryotic/mitochondrial release factor family. Methylated by PrmC. Methylation increases the termination efficiency of RF1.

It is found in the cytoplasm. Functionally, peptide chain release factor 1 directs the termination of translation in response to the peptide chain termination codons UAG and UAA. The protein is Peptide chain release factor 1 of Brucella abortus (strain S19).